The primary structure comprises 820 residues: TORTIFOLIA1-like protein 2 (820 aa).

5 HEAT repeats span residues 61–98 (DKVS…FHEG), 102–139 (PYLG…KMSC), 146–183 (GVFV…SSPE), 187–224 (AIIQ…AGGA), and 228–265 (SVLS…TGEK). Residues 304–321 (PGSDSPEPSETESSVKES) show a composition bias toward low complexity. Disordered stretches follow at residues 304–325 (PGSD…YNGA), 357–377 (PVSA…SNQD), and 584–644 (GSTI…GKTG). Residues 367 to 377 (YNDDPRKSNQD) show a composition bias toward basic and acidic residues. A compositionally biased stretch (polar residues) spans 584–613 (GSTISPRLSSCTSRTSTDIRNRQSTLSTSK).

This chain is TORTIFOLIA1-like protein 2, found in Arabidopsis thaliana (Mouse-ear cress).